Consider the following 590-residue polypeptide: MRMTTEEAFVKVLQRHGIDTAFGIIGSAFMPISDLFPRAGIRFFDCAHEGSGGMMADGFTRASGRMAMIIAQNGPGVTNFVTAVKTAYWNHTPMLVVTPQAANRTIGQGGFQEVEQMALFRDMVCWQEELRDPARIAEVLDRVIRKARRASAPAQINLPRDMFTKIIDIELPQGVDLPRPAPDAQALDRAAALLSSARFPVILNGAGVVLAEAIPDTVALAERLEAPVCTGYQHNDAFPGSHPLFAGPLGYNGSKAAMQLMSQADVVLCLGTRLNPFSTLPGYGIDYWPKAAAVIQVDINPDRIGLTRPVTLGIAADAGAVARGILARLGAQAGDQDRAERAARIATTKSRWAQELASMDHEEDDPGTSWNERARAAKPGWMSPRMAWRAITAALPPEAILSSDIGNNCAIGNAYPSFAAGRKYLAPGLFGPCGYGLPAIIGAKIACPETPVVGFAGDGAFGISVTELTAIGRADWPAITMVVFRNYQWGAEKRNSTLWYDDNFVGTELDLQVSYAGIAQACGLQGVVARTMEELTEALRKALADQAAGKTTLIEALINQELGEPFRRDAMTKPVVVAGIDPADMRPQPR.

It belongs to the TPP enzyme family. The cofactor is Mg(2+). Thiamine diphosphate is required as a cofactor.

It is found in the cytoplasm. The catalysed reaction is acetyl phosphate + sulfite + H(+) = sulfoacetaldehyde + phosphate. It functions in the pathway organosulfur degradation; taurine degradation via aerobic pathway; acetyl phosphate and sulfite from taurine: step 2/2. The sequence is that of Sulfoacetaldehyde acetyltransferase from Rhodobacter capsulatus (strain ATCC BAA-309 / NBRC 16581 / SB1003).